The primary structure comprises 170 residues: Adenine phosphoribosyltransferase (170 aa).

The protein belongs to the purine/pyrimidine phosphoribosyltransferase family. As to quaternary structure, homodimer.

The protein localises to the cytoplasm. It carries out the reaction AMP + diphosphate = 5-phospho-alpha-D-ribose 1-diphosphate + adenine. It participates in purine metabolism; AMP biosynthesis via salvage pathway; AMP from adenine: step 1/1. Its function is as follows. Catalyzes a salvage reaction resulting in the formation of AMP, that is energically less costly than de novo synthesis. This Mycoplasma mycoides subsp. mycoides SC (strain CCUG 32753 / NCTC 10114 / PG1) protein is Adenine phosphoribosyltransferase.